We begin with the raw amino-acid sequence, 657 residues long: Probable Xaa-Pro aminopeptidase P (657 aa).

Mn(2+) is bound by residues Asp453, Asp464, Glu562, and Glu576.

The protein belongs to the peptidase M24B family. Requires Mn(2+) as cofactor.

The catalysed reaction is Release of any N-terminal amino acid, including proline, that is linked to proline, even from a dipeptide or tripeptide.. Catalyzes the removal of a penultimate prolyl residue from the N-termini of peptides. The sequence is that of Probable Xaa-Pro aminopeptidase P (ampp) from Talaromyces marneffei (strain ATCC 18224 / CBS 334.59 / QM 7333) (Penicillium marneffei).